The primary structure comprises 253 residues: Imidazole glycerol phosphate synthase subunit HisF (253 aa).

Catalysis depends on residues Asp11 and Asp130.

This sequence belongs to the HisA/HisF family. As to quaternary structure, heterodimer of HisH and HisF.

Its subcellular location is the cytoplasm. The enzyme catalyses 5-[(5-phospho-1-deoxy-D-ribulos-1-ylimino)methylamino]-1-(5-phospho-beta-D-ribosyl)imidazole-4-carboxamide + L-glutamine = D-erythro-1-(imidazol-4-yl)glycerol 3-phosphate + 5-amino-1-(5-phospho-beta-D-ribosyl)imidazole-4-carboxamide + L-glutamate + H(+). The protein operates within amino-acid biosynthesis; L-histidine biosynthesis; L-histidine from 5-phospho-alpha-D-ribose 1-diphosphate: step 5/9. Its function is as follows. IGPS catalyzes the conversion of PRFAR and glutamine to IGP, AICAR and glutamate. The HisF subunit catalyzes the cyclization activity that produces IGP and AICAR from PRFAR using the ammonia provided by the HisH subunit. The sequence is that of Imidazole glycerol phosphate synthase subunit HisF from Dinoroseobacter shibae (strain DSM 16493 / NCIMB 14021 / DFL 12).